Here is a 119-residue protein sequence, read N- to C-terminus: Large ribosomal subunit protein uL18 (119 aa).

This sequence belongs to the universal ribosomal protein uL18 family. Part of the 50S ribosomal subunit; part of the 5S rRNA/L5/L18/L25 subcomplex. Contacts the 5S and 23S rRNAs.

Its function is as follows. This is one of the proteins that bind and probably mediate the attachment of the 5S RNA into the large ribosomal subunit, where it forms part of the central protuberance. This Staphylococcus aureus (strain Mu3 / ATCC 700698) protein is Large ribosomal subunit protein uL18.